Here is a 405-residue protein sequence, read N- to C-terminus: Riboflavin biosynthesis protein RibBA (405 aa).

The DHBP synthase stretch occupies residues M1–K205. D-ribulose 5-phosphate-binding positions include R30–E31, D35, R144–T148, and E168. Residue E31 participates in Mg(2+) binding. H147 is a Mg(2+) binding site. Residues Q206 to K405 are GTP cyclohydrolase II. R256 to S260 contributes to the GTP binding site. Residues C261, C272, and C274 each contribute to the Zn(2+) site. GTP contacts are provided by residues Q277, E299–R301, and T321. The active-site Proton acceptor; for GTP cyclohydrolase activity is the D333. R335 acts as the Nucleophile; for GTP cyclohydrolase activity in catalysis. 2 residues coordinate GTP: T356 and K361.

It in the N-terminal section; belongs to the DHBP synthase family. The protein in the C-terminal section; belongs to the GTP cyclohydrolase II family. Mg(2+) serves as cofactor. Mn(2+) is required as a cofactor. The cofactor is Zn(2+).

The enzyme catalyses D-ribulose 5-phosphate = (2S)-2-hydroxy-3-oxobutyl phosphate + formate + H(+). It catalyses the reaction GTP + 4 H2O = 2,5-diamino-6-hydroxy-4-(5-phosphoribosylamino)-pyrimidine + formate + 2 phosphate + 3 H(+). It functions in the pathway cofactor biosynthesis; riboflavin biosynthesis; 2-hydroxy-3-oxobutyl phosphate from D-ribulose 5-phosphate: step 1/1. It participates in cofactor biosynthesis; riboflavin biosynthesis; 5-amino-6-(D-ribitylamino)uracil from GTP: step 1/4. Catalyzes the conversion of D-ribulose 5-phosphate to formate and 3,4-dihydroxy-2-butanone 4-phosphate. In terms of biological role, catalyzes the conversion of GTP to 2,5-diamino-6-ribosylamino-4(3H)-pyrimidinone 5'-phosphate (DARP), formate and pyrophosphate. The chain is Riboflavin biosynthesis protein RibBA from Porphyromonas gingivalis (strain ATCC 33277 / DSM 20709 / CIP 103683 / JCM 12257 / NCTC 11834 / 2561).